The chain runs to 568 residues: MESLGLQTVTLSDGTTAYVQQAIKGEKLLEGQVIQLEDGTTAYIHQVTIQKESFSFEDGQPVQLEDGSMAYIHHTPKEGYDPSALEAVQLEDGSTAYIHHPVSVPPDSTILAVQTEVGLEDLAAEEEEGFGADTVVALEQYASKVLHDSPASHNGKGQQVGDRAFRCGYKGCGRLYTTAHHLKVHERAHTGDRSYRCDFPSCGKAFATGYGLKSHVRTHTGEKPYKCPEELCSKAFKTSGDLQKHVRTHTGERPFRCPFEGCGRSFTTSNIRKVHVRTHTGERPYTCPEPHCGRGFTSATNYKNHVRIHTGEKPYVCTVPGCGKRFTEYSSLYKHHVVHTHCKPYTCSSCGKTYRQTSTLAMHKRSAHGELEATEESEQALYEQQQLEAASAAEESPSPKPTHIAYLSEVKEESSDIPTQVAMVTEEDGAPQVALITQDGTQQVSLSPEDLQALGSAISVVTQHRSTTLTIPGHQEELATSGTHTVTMVSADGTQTQPVTIITSGALVTEDSSVASLHHQQVALLATANGTHIAVQLEDQQTLEEVISVATSAMQQGAVTLETTESGC.

Lys-24 is covalently cross-linked (Glycyl lysine isopeptide (Lys-Gly) (interchain with G-Cter in SUMO2)). 3 tandem repeats follow at residues 34–45 (IQLEDGTTAYIH), 62–73 (VQLEDGSMAYIH), and 88–99 (VQLEDGSTAYIH). The interval 34–99 (IQLEDGTTAY…LEDGSTAYIH (66 aa)) is 3 X 12 AA approximate repeats. 7 consecutive C2H2-type zinc fingers follow at residues 165 to 189 (FRCG…ERAH), 195 to 219 (YRCD…VRTH), 225 to 249 (YKCP…VRTH), 255 to 279 (FRCP…VRTH), 285 to 309 (YTCP…VRIH), 315 to 339 (YVCT…HVVH), and 345 to 368 (YTCS…RSAH). The segment at 365 to 401 (RSAHGELEATEESEQALYEQQQLEAASAAEESPSPKP) is disordered. Residues 379–396 (QALYEQQQLEAASAAEES) are compositionally biased toward low complexity.

The protein belongs to the krueppel C2H2-type zinc-finger protein family.

The protein resides in the nucleus. In terms of biological role, may be involved in transcriptional regulation. The protein is Zinc finger protein 76 (Znf76) of Rattus norvegicus (Rat).